The sequence spans 223 residues: 2-C-methyl-D-erythritol 4-phosphate cytidylyltransferase (223 aa).

Belongs to the IspD/TarI cytidylyltransferase family. IspD subfamily.

It catalyses the reaction 2-C-methyl-D-erythritol 4-phosphate + CTP + H(+) = 4-CDP-2-C-methyl-D-erythritol + diphosphate. It participates in isoprenoid biosynthesis; isopentenyl diphosphate biosynthesis via DXP pathway; isopentenyl diphosphate from 1-deoxy-D-xylulose 5-phosphate: step 2/6. Its function is as follows. Catalyzes the formation of 4-diphosphocytidyl-2-C-methyl-D-erythritol from CTP and 2-C-methyl-D-erythritol 4-phosphate (MEP). This is 2-C-methyl-D-erythritol 4-phosphate cytidylyltransferase from Prochlorococcus marinus (strain MIT 9301).